A 199-amino-acid polypeptide reads, in one-letter code: Small ribosomal subunit protein uS4 (199 aa).

The region spanning 91–151 (SRLDNLVYRF…EKSKNVKAIA (61 aa)) is the S4 RNA-binding domain.

This sequence belongs to the universal ribosomal protein uS4 family. Part of the 30S ribosomal subunit. Contacts protein S5. The interaction surface between S4 and S5 is involved in control of translational fidelity.

Its function is as follows. One of the primary rRNA binding proteins, it binds directly to 16S rRNA where it nucleates assembly of the body of the 30S subunit. With S5 and S12 plays an important role in translational accuracy. The sequence is that of Small ribosomal subunit protein uS4 from Exiguobacterium sp. (strain ATCC BAA-1283 / AT1b).